We begin with the raw amino-acid sequence, 162 residues long: Ribosome maturation factor RimM (162 aa).

A PRC barrel domain is found at 86–160 (EGRYYYFALI…GIHVDPIPGL (75 aa)).

The protein belongs to the RimM family. Binds ribosomal protein uS19.

The protein localises to the cytoplasm. Its function is as follows. An accessory protein needed during the final step in the assembly of 30S ribosomal subunit, possibly for assembly of the head region. Essential for efficient processing of 16S rRNA. May be needed both before and after RbfA during the maturation of 16S rRNA. It has affinity for free ribosomal 30S subunits but not for 70S ribosomes. This chain is Ribosome maturation factor RimM, found in Thermus thermophilus (strain ATCC BAA-163 / DSM 7039 / HB27).